A 178-amino-acid polypeptide reads, in one-letter code: Ribonuclease M5 (178 aa).

The Toprim domain occupies Asp10–Asn94. Positions 16, 62, and 64 each coordinate Mg(2+).

This sequence belongs to the ribonuclease M5 family. Mg(2+) is required as a cofactor.

The protein localises to the cytoplasm. The catalysed reaction is Endonucleolytic cleavage of RNA, removing 21 and 42 nucleotides, respectively, from the 5'- and 3'-termini of a 5S-rRNA precursor.. Its function is as follows. Required for correct processing of both the 5' and 3' ends of 5S rRNA precursor. Cleaves both sides of a double-stranded region yielding mature 5S rRNA in one step. The protein is Ribonuclease M5 (rnmV) of Mycoplasma genitalium (strain ATCC 33530 / DSM 19775 / NCTC 10195 / G37) (Mycoplasmoides genitalium).